The following is a 436-amino-acid chain: MGKPVVAIVGRPNVGKSTIFNRIAGERISIVEDTPGVTRDRIYSSAEWLNHDFNLIDTGGIEVGDEPFLAQIRHQAEIAMEEADVIIFMTNGREGVTAADEEVAKILYRTKKPVVLAVNKVDNPEMRANIYDFYALGFGEPFPISGTHGLGLGDLLDAVSEHFKNIPETKYEDEVVQFCLIGRPNVGKSSLVNAMIGEERVIVSNIAGTTRDAIDTRFTYNQRDFVIVDTAGMRKKGKVYEATEKYSVLRALKAIDRSEVVCVVLDGEEGIIEQDKRIAGYAHEAGKAVVIVVNKWDAVEKDERTMKEFEEKVRDHFQFLDYAPVLFMSALTKKRIHTLMPAVMTASENHSMRVQTNILNDIIMDAVAMNPTPTHNGNRLKIYYATQVAVKPPTFVVFVNDPELMHFSYERFLENRIRDAFGFEGTPIRIFARARK.

2 consecutive EngA-type G domains span residues 4-167 (PVVA…KNIP) and 176-351 (VQFC…ENHS). Residues 10–17 (GRPNVGKS), 57–61 (DTGGI), 119–122 (NKVD), 182–189 (GRPNVGKS), 229–233 (DTAGM), and 294–297 (NKWD) each bind GTP. The region spanning 352–436 (MRVQTNILND…PIRIFARARK (85 aa)) is the KH-like domain.

Belongs to the TRAFAC class TrmE-Era-EngA-EngB-Septin-like GTPase superfamily. EngA (Der) GTPase family. As to quaternary structure, associates with the 50S ribosomal subunit.

GTPase that plays an essential role in the late steps of ribosome biogenesis. The sequence is that of GTPase Der from Bacillus licheniformis (strain ATCC 14580 / DSM 13 / JCM 2505 / CCUG 7422 / NBRC 12200 / NCIMB 9375 / NCTC 10341 / NRRL NRS-1264 / Gibson 46).